The following is a 412-amino-acid chain: Serine hydroxymethyltransferase (412 aa).

(6S)-5,6,7,8-tetrahydrofolate-binding positions include L117 and 121–123 (GHL). N6-(pyridoxal phosphate)lysine is present on K226.

It belongs to the SHMT family. As to quaternary structure, homodimer. The cofactor is pyridoxal 5'-phosphate.

The protein resides in the cytoplasm. The catalysed reaction is (6R)-5,10-methylene-5,6,7,8-tetrahydrofolate + glycine + H2O = (6S)-5,6,7,8-tetrahydrofolate + L-serine. It functions in the pathway one-carbon metabolism; tetrahydrofolate interconversion. Its pathway is amino-acid biosynthesis; glycine biosynthesis; glycine from L-serine: step 1/1. Functionally, catalyzes the reversible interconversion of serine and glycine with tetrahydrofolate (THF) serving as the one-carbon carrier. This reaction serves as the major source of one-carbon groups required for the biosynthesis of purines, thymidylate, methionine, and other important biomolecules. Also exhibits THF-independent aldolase activity toward beta-hydroxyamino acids, producing glycine and aldehydes, via a retro-aldol mechanism. The chain is Serine hydroxymethyltransferase from Staphylococcus aureus (strain MW2).